We begin with the raw amino-acid sequence, 63 residues long: Large ribosomal subunit protein bL35 (63 aa).

Belongs to the bacterial ribosomal protein bL35 family.

The polypeptide is Large ribosomal subunit protein bL35 (Campylobacter fetus subsp. fetus (strain 82-40)).